Here is a 279-residue protein sequence, read N- to C-terminus: 3-methyl-2-oxobutanoate hydroxymethyltransferase 2 (279 aa).

Residues aspartate 58 and aspartate 97 each coordinate Mg(2+). 3-methyl-2-oxobutanoate is bound by residues 58-59, aspartate 97, and lysine 126; that span reads DS. Glutamate 128 lines the Mg(2+) pocket. The active-site Proton acceptor is the glutamate 195.

The protein belongs to the PanB family. Homodecamer; pentamer of dimers. Mg(2+) is required as a cofactor.

It localises to the cytoplasm. It catalyses the reaction 3-methyl-2-oxobutanoate + (6R)-5,10-methylene-5,6,7,8-tetrahydrofolate + H2O = 2-dehydropantoate + (6S)-5,6,7,8-tetrahydrofolate. Its pathway is cofactor biosynthesis; (R)-pantothenate biosynthesis; (R)-pantoate from 3-methyl-2-oxobutanoate: step 1/2. Functionally, catalyzes the reversible reaction in which hydroxymethyl group from 5,10-methylenetetrahydrofolate is transferred onto alpha-ketoisovalerate to form ketopantoate. The protein is 3-methyl-2-oxobutanoate hydroxymethyltransferase 2 of Methylibium petroleiphilum (strain ATCC BAA-1232 / LMG 22953 / PM1).